The sequence spans 473 residues: Serine/threonine-protein phosphatase 2A activator 1 (473 aa).

Residues 360 to 473 form a disordered region; the sequence is NAVPPPTSAH…HVPTKAPWAK (114 aa). Positions 368 to 378 are enriched in polar residues; the sequence is AHMSTTQSQSR. Low complexity predominate over residues 395-416; sequence APWATATQAAPPAGAGTAAPWA.

Belongs to the PTPA-type PPIase family.

The protein localises to the cytoplasm. It localises to the nucleus. It carries out the reaction [protein]-peptidylproline (omega=180) = [protein]-peptidylproline (omega=0). Functionally, PPIases accelerate the folding of proteins. It catalyzes the cis-trans isomerization of proline imidic peptide bonds in oligopeptides. Acts as a regulatory subunit for PP2A-like phosphatases modulating their activity or substrate specificity, probably by inducing a conformational change in the catalytic subunit, a direct target of the PPIase. Can reactivate inactive phosphatase PP2A-phosphatase methylesterase complexes (PP2Ai) in presence of ATP and Mg(2+) by dissociating the inactive form from the complex. In Aspergillus fumigatus (strain ATCC MYA-4609 / CBS 101355 / FGSC A1100 / Af293) (Neosartorya fumigata), this protein is Serine/threonine-protein phosphatase 2A activator 1 (rrd1).